The sequence spans 118 residues: Holo-[acyl-carrier-protein] synthase (118 aa).

Residues D8 and E58 each coordinate Mg(2+).

It belongs to the P-Pant transferase superfamily. AcpS family. It depends on Mg(2+) as a cofactor.

It localises to the cytoplasm. It carries out the reaction apo-[ACP] + CoA = holo-[ACP] + adenosine 3',5'-bisphosphate + H(+). In terms of biological role, transfers the 4'-phosphopantetheine moiety from coenzyme A to a Ser of acyl-carrier-protein. The polypeptide is Holo-[acyl-carrier-protein] synthase (Lactobacillus helveticus (strain DPC 4571)).